The primary structure comprises 536 residues: Casein kinase I homolog RAG8 (536 aa).

Polar residues predominate over residues 26-42 (HSTQVLHGSGQHGMQPS). The disordered stretch occupies residues 26 to 68 (HSTQVLHGSGQHGMQPSGNNVLNGLANGATGLQSSASSTSTRD). Low complexity predominate over residues 43–65 (GNNVLNGLANGATGLQSSASSTS). Residues 77–361 (YKIGKKIGEG…QKLDGEYDWM (285 aa)) form the Protein kinase domain. Residues 83-91 (IGEGSFGVL) and K106 contribute to the ATP site. Catalysis depends on D196, which acts as the Proton acceptor. 2 stretches are compositionally biased toward polar residues: residues 407–420 (NNLN…QSHS) and 427–436 (DLTQGVSNAP). Residues 407-524 (NNLNGSNVPL…NGKVQVADSN (118 aa)) form a disordered region. Composition is skewed to low complexity over residues 437-453 (QQPQ…QHTQ) and 463-514 (AYKQ…NQPQ). 2 S-palmitoyl cysteine lipidation sites follow: C535 and C536.

Belongs to the protein kinase superfamily. CK1 Ser/Thr protein kinase family. Casein kinase I subfamily.

The enzyme catalyses L-seryl-[protein] + ATP = O-phospho-L-seryl-[protein] + ADP + H(+). It catalyses the reaction L-threonyl-[protein] + ATP = O-phospho-L-threonyl-[protein] + ADP + H(+). Its function is as follows. Casein kinases are operationally defined by their preferential utilization of acidic proteins such as caseins as substrates. This Kluyveromyces lactis (strain ATCC 8585 / CBS 2359 / DSM 70799 / NBRC 1267 / NRRL Y-1140 / WM37) (Yeast) protein is Casein kinase I homolog RAG8 (RAG8).